We begin with the raw amino-acid sequence, 97 residues long: uncharacterized protein (97 aa).

Ser2 carries the post-translational modification N-acetylserine.

This is an uncharacterized protein from Mycobacterium tuberculosis (strain ATCC 25618 / H37Rv).